Here is a 505-residue protein sequence, read N- to C-terminus: Maturase K (505 aa).

It belongs to the intron maturase 2 family. MatK subfamily.

Its subcellular location is the plastid. It is found in the chloroplast. Its function is as follows. Usually encoded in the trnK tRNA gene intron. Probably assists in splicing its own and other chloroplast group II introns. The chain is Maturase K from Barclaya longifolia (Orchid lily).